Consider the following 1027-residue polypeptide: Kinesin heavy chain isoform 5A (1027 aa).

Alanine 2 carries the post-translational modification N-acetylalanine. One can recognise a Kinesin motor domain in the interval 9–327; that stretch reads SIKVLCRFRP…LMFGQRAKTI (319 aa). Residue 86-93 participates in ATP binding; that stretch reads GQTSSGKT. A microtubule-binding region spans residues 174 to 315; that stretch reads VSSPEEILDV…PSSYNDAETK (142 aa). A necessary for interaction with ZFYVE27 region spans residues 271 to 361; sequence EGTKSYVPYR…KTKAQKETIA (91 aa). Residues 331 to 905 adopt a coiled-coil conformation; that stretch reads ASVNLELTAE…EVDRIKEAVR (575 aa). The tract at residues 353–1027 is interaction with BICD2; that stretch reads TKAQKETIAK…FPLHQETAAS (675 aa). Threonine 397 is subject to Phosphothreonine. Residues 906 to 936 form a disordered region; the sequence is YKSSGKRGHSAQIAKPVRPGHYPASSPTNPY. The interval 907-1027 is globular; it reads KSSGKRGHSA…FPLHQETAAS (121 aa).

It belongs to the TRAFAC class myosin-kinesin ATPase superfamily. Kinesin family. Kinesin subfamily. Oligomer composed of two heavy chains and two light chains. Interacts with GRIP1. Interacts with FMR1 (via C-terminus); this interaction is increased in a mGluR-dependent manner. Interacts with BORCS5. Interacts with ZFYVE27. Interacts with VAPA, VAPB, SURF4, RAB11A (GDP-bound form), RAB11B (GDP-bound form) and RTN3 in a ZFYVE27-dependent manner. Interacts with BICD2. Interacts with DTNB. In terms of tissue distribution, expressed in brain.

It is found in the cytoplasm. The protein localises to the perinuclear region. The protein resides in the cytoskeleton. Its subcellular location is the perikaryon. It catalyses the reaction ATP + H2O + a kinesin associated with a microtubule at position (n) = ADP + phosphate a kinesin associated with a microtubule at position (n+1, toward the plus end).. Microtubule-dependent motor required for slow axonal transport of neurofilament proteins (NFH, NFM and NFL). Can induce formation of neurite-like membrane protrusions in non-neuronal cells in a ZFYVE27-dependent manner. The ZFYVE27-KIF5A complex contributes to the vesicular transport of VAPA, VAPB, SURF4, RAB11A, RAB11B and RTN3 proteins in neurons. Required for anterograde axonal transportation of MAPK8IP3/JIP3 which is essential for MAPK8IP3/JIP3 function in axon elongation. The sequence is that of Kinesin heavy chain isoform 5A from Rattus norvegicus (Rat).